We begin with the raw amino-acid sequence, 502 residues long: CDP-diacylglycerol--glycerol-3-phosphate 3-phosphatidyltransferase (502 aa).

58-65 is an ATP binding site; the sequence is STLYIGKE. 2 consecutive PLD phosphodiesterase domains span residues 143–169 and 410–443; these read GWGLQHMKIYGADDNLIISGANLSRDY and KGNTYHAKGFWLSTQHHKHPFLTTIGSSNYTSRS. Active-site residues include His-148, Lys-150, and Asp-155.

This sequence belongs to the CDP-alcohol phosphatidyltransferase class-II family.

It localises to the mitochondrion. It catalyses the reaction a CDP-1,2-diacyl-sn-glycerol + sn-glycerol 3-phosphate = a 1,2-diacyl-sn-glycero-3-phospho-(1'-sn-glycero-3'-phosphate) + CMP + H(+). It participates in phospholipid metabolism; phosphatidylglycerol biosynthesis; phosphatidylglycerol from CDP-diacylglycerol: step 1/2. Functions in the biosynthesis of the anionic phospholipids phosphatidylglycerol and cardiolipin. The sequence is that of CDP-diacylglycerol--glycerol-3-phosphate 3-phosphatidyltransferase (pgs1) from Schizosaccharomyces pombe (strain 972 / ATCC 24843) (Fission yeast).